A 216-amino-acid chain; its full sequence is Orotate phosphoribosyltransferase (216 aa).

5-phospho-alpha-D-ribose 1-diphosphate is bound by residues Arg100, Lys104, His106, and 126-134; that span reads EDLISTGGS. Ser130 provides a ligand contact to orotate.

This sequence belongs to the purine/pyrimidine phosphoribosyltransferase family. PyrE subfamily. Homodimer. Interacts with BrxC. Mg(2+) is required as a cofactor.

The enzyme catalyses orotidine 5'-phosphate + diphosphate = orotate + 5-phospho-alpha-D-ribose 1-diphosphate. It functions in the pathway pyrimidine metabolism; UMP biosynthesis via de novo pathway; UMP from orotate: step 1/2. Functionally, catalyzes the transfer of a ribosyl phosphate group from 5-phosphoribose 1-diphosphate to orotate, leading to the formation of orotidine monophosphate (OMP). This is Orotate phosphoribosyltransferase from Bacillus subtilis (strain 168).